Here is a 667-residue protein sequence, read N- to C-terminus: Protein angel homolog 1 (667 aa).

Phosphoserine is present on residues serine 77 and serine 105.

It belongs to the CCR4/nocturin family.

The sequence is that of Protein angel homolog 1 from Rattus norvegicus (Rat).